Consider the following 271-residue polypeptide: uncharacterized protein (271 aa).

The disordered stretch occupies residues 233–261; sequence VEPDPNRFSEPVDQPTLVEEGKEARRTER. Residues 251 to 261 show a composition bias toward basic and acidic residues; that stretch reads EEGKEARRTER.

Functionally, may be involved in swimming motility. This is an uncharacterized protein from Haloferax volcanii (strain ATCC 29605 / DSM 3757 / JCM 8879 / NBRC 14742 / NCIMB 2012 / VKM B-1768 / DS2) (Halobacterium volcanii).